A 91-amino-acid chain; its full sequence is Large ribosomal subunit protein eL37 (91 aa).

Residues C19, C22, C34, and C37 each coordinate Zn(2+). Residues 19–37 form a C4-type zinc finger; that stretch reads CRRCGKSSFHIQKKTCASC.

Belongs to the eukaryotic ribosomal protein eL37 family. Zn(2+) is required as a cofactor.

Its function is as follows. Binds to the 23S rRNA. In Dictyostelium discoideum (Social amoeba), this protein is Large ribosomal subunit protein eL37 (rpl37).